A 270-amino-acid chain; its full sequence is Putative pyruvate, phosphate dikinase regulatory protein (270 aa).

151–158 provides a ligand contact to ADP; sequence GVSRTSKT.

The protein belongs to the pyruvate, phosphate/water dikinase regulatory protein family. PDRP subfamily.

The catalysed reaction is N(tele)-phospho-L-histidyl/L-threonyl-[pyruvate, phosphate dikinase] + ADP = N(tele)-phospho-L-histidyl/O-phospho-L-threonyl-[pyruvate, phosphate dikinase] + AMP + H(+). It carries out the reaction N(tele)-phospho-L-histidyl/O-phospho-L-threonyl-[pyruvate, phosphate dikinase] + phosphate + H(+) = N(tele)-phospho-L-histidyl/L-threonyl-[pyruvate, phosphate dikinase] + diphosphate. Bifunctional serine/threonine kinase and phosphorylase involved in the regulation of the pyruvate, phosphate dikinase (PPDK) by catalyzing its phosphorylation/dephosphorylation. In Ligilactobacillus salivarius (strain UCC118) (Lactobacillus salivarius), this protein is Putative pyruvate, phosphate dikinase regulatory protein.